We begin with the raw amino-acid sequence, 128 residues long: Ribonuclease P protein component (128 aa).

Belongs to the RnpA family. In terms of assembly, consists of a catalytic RNA component (M1 or rnpB) and a protein subunit.

It catalyses the reaction Endonucleolytic cleavage of RNA, removing 5'-extranucleotides from tRNA precursor.. Its function is as follows. RNaseP catalyzes the removal of the 5'-leader sequence from pre-tRNA to produce the mature 5'-terminus. It can also cleave other RNA substrates such as 4.5S RNA. The protein component plays an auxiliary but essential role in vivo by binding to the 5'-leader sequence and broadening the substrate specificity of the ribozyme. In Prochlorococcus marinus (strain NATL2A), this protein is Ribonuclease P protein component.